Consider the following 486-residue polypeptide: Ty transcription activator TEC1 (486 aa).

Position 2 is an N-acetylserine (Ser2). Residues 125 to 199 (WTIGCDKWSE…QVWKKTIQNK (75 aa)) constitute a DNA-binding region (TEA). The residue at position 325 (Ser325) is a Phosphoserine. Disordered regions lie at residues 372-410 (EHES…SRPV) and 465-486 (HYEH…GNFY). The segment covering 377-388 (PEFSSNSNSGSE) has biased composition (low complexity). Positions 472–486 (QRNFTPSNQSHGNFY) are enriched in polar residues.

The protein belongs to the TEC1 family.

It localises to the nucleus. TEC1 is involved in the activation of TY1 and TY1-mediated gene expression. It is not involved in mating or sporulation processes. The sequence is that of Ty transcription activator TEC1 (TEC1) from Saccharomyces cerevisiae (strain ATCC 204508 / S288c) (Baker's yeast).